A 421-amino-acid chain; its full sequence is NADP(+)-dependent glutamate dehydrogenase (421 aa).

Substrate-binding residues include Lys-70 and Lys-94. Catalysis depends on Lys-106, which acts as the Proton donor. Residues Thr-190 and Asn-221 each coordinate NADP(+). Ser-354 contributes to the substrate binding site.

The protein belongs to the Glu/Leu/Phe/Val dehydrogenases family. In terms of assembly, homohexamer.

It catalyses the reaction L-glutamate + NADP(+) + H2O = 2-oxoglutarate + NH4(+) + NADPH + H(+). With respect to regulation, is not regulated allosterically. Activity is inhibited in the presence of high ionic strength; the inhibitory effect of KCl is slightly higher than that of NaCl. Its function is as follows. Catalyzes the reversible oxidative deamination of L-glutamate to 2-oxoglutarate and ammonia, thereby playing a key role at the intersection of the carbon and nitrogen metabolic pathways. Shows a high preference for NADP(+)/NADPH as the acceptor/donor over NAD(+)/NADH. May function in vivo in the synthetic direction. Also catalyzes at very low rates the oxidative deamination of L-2-aminobutyrate, and the reductive amination of 2-oxovalerate and 2-oxobutyrate. The chain is NADP(+)-dependent glutamate dehydrogenase from Pyrobaculum calidifontis (strain DSM 21063 / JCM 11548 / VA1).